The following is a 207-amino-acid chain: MAALVEPLGLERDVSRAVELLERLQRSGELPPQKLQALQRVLQSRFCSAIREVYEQLYDTLDITGSAEVRAHATAKATVAAFTASEGHAHPRVVELPKTDEGLGFNIMGGKEQNSPIYISRVIPGGVADRHGGLKRGDQLLSVNGVSVEGEHHEKAVELLKAAQGSVKLVVRYTPRVLEEMEARFEKMRSARRRQQHHSYTSLESRG.

Residues 1-13 (MAALVEPLGLERD) carry the Kinase interacting site motif. The region spanning 10 to 65 (LERDVSRAVELLERLQRSGELPPQKLQALQRVLQSRFCSAIREVYEQLYDTLDITG) is the L27 domain. Positions 93-175 (VVELPKTDEG…SVKLVVRYTP (83 aa)) constitute a PDZ domain. Residues 187-207 (KMRSARRRQQHHSYTSLESRG) are disordered. A compositionally biased stretch (polar residues) spans 198 to 207 (HSYTSLESRG).

The protein belongs to the lin-7 family. In terms of assembly, forms a complex with CASK and CASKIN1. Component of the brain-specific heterotrimeric complex (LIN-10-LIN-2-LIN-7 complex) composed of at least APBA1, CASK, and LIN7, which associates with the motor protein KIF17 to transport vesicles along microtubules. Forms a heterotrimeric complex composed of MMP5, LIN7B and PATJ; the N-terminal L27 domain of PALS1 interacts with the L27 domain of PATJ and the C-terminal L27 domain of PALS1 interacts with the L27 domain of LIN7B. Forms a heterotrimeric complex with DLG1 and CASK via their L27 domains. Interacts with DLG4 and GRIN2B as well as CDH1 and CTNNB1, the channels KCNJ12/Kir2.2, KCNJ4/Kir2.3 and probably KCNJ2/Kir2.1 and SLC6A12/BGT-1 via its PDZ domain. The association of LIN7A with cadherin and beta-catenin is calcium-dependent, occurs at synaptic junctions and requires the actin cytoskeleton. Interacts with EGFR, ERBB2, ERBB3 and ERBB4 with both PDZ and KID domains. Associates with KIF17 via APBA1. Interacts with ASIC3. Interacts with TOPK. Interacts with RTKN. Interacts with APBA1. Interacts with MPP7. Interacts with DLG2. Interacts with DLG3. Expressed in the kidney; predominantly in the vasa recta.

The protein localises to the cell membrane. It localises to the basolateral cell membrane. Its subcellular location is the cell junction. The protein resides in the postsynaptic density membrane. It is found in the tight junction. Plays a role in establishing and maintaining the asymmetric distribution of channels and receptors at the plasma membrane of polarized cells. Forms membrane-associated multiprotein complexes that may regulate delivery and recycling of proteins to the correct membrane domains. The tripartite complex composed of LIN7 (LIN7A, LIN7B or LIN7C), CASK and APBA1 associates with the motor protein KIF17 to transport vesicles containing N-methyl-D-aspartate (NMDA) receptor subunit NR2B along microtubules. This complex may have the potential to couple synaptic vesicle exocytosis to cell adhesion in brain. Ensures the proper localization of GRIN2B (subunit 2B of the NMDA receptor) to neuronal postsynaptic density and may function in localizing synaptic vesicles at synapses where it is recruited by beta-catenin and cadherin. Required to localize Kir2 channels, GABA transporter (SLC6A12) and EGFR/ERBB1, ERBB2, ERBB3 and ERBB4 to the basolateral membrane of epithelial cells. May increase the amplitude of ASIC3 acid-evoked currents by stabilizing the channel at the cell surface. This Mus musculus (Mouse) protein is Protein lin-7 homolog B (Lin7b).